The chain runs to 54 residues: UPF0391 membrane protein msr3702 (54 aa).

A run of 2 helical transmembrane segments spans residues 4 to 24 and 30 to 50; these read WALVFLVVAIIAGALGFGGIA and IAQILFFIFLAFLVISLLAGL.

The protein belongs to the UPF0391 family.

The protein localises to the cell membrane. The chain is UPF0391 membrane protein msr3702 from Mesorhizobium japonicum (strain LMG 29417 / CECT 9101 / MAFF 303099) (Mesorhizobium loti (strain MAFF 303099)).